Here is a 378-residue protein sequence, read N- to C-terminus: Forkhead box protein I1 (378 aa).

2 disordered regions span residues 1-26 (MSSFDLPAPSPPRCSPQFPSIGQEPP) and 208-278 (DNGN…APCL). Positions 123 to 217 (RPPYSYSALI…DNGNFRRKRK (95 aa)) form a DNA-binding region, fork-head. The span at 236–248 (SSLPVDSPKTTEP) shows a compositional bias: polar residues.

Expressed in kidney.

It localises to the nucleus. Functionally, transcriptional activator required for the development of normal hearing, sense of balance and kidney function. Required for the expression of SLC26A4/PDS, JAG1 and COCH in a subset of epithelial cells and the development of the endolymphatic system in the inner ear. Also required for the expression of SLC4A1/AE1, SLC4A9/AE4, ATP6V1B1 and the differentiation of intercalated cells in the epithelium of distal renal tubules. The protein is Forkhead box protein I1 (FOXI1) of Homo sapiens (Human).